The following is a 128-amino-acid chain: Holo-[acyl-carrier-protein] synthase (128 aa).

2 residues coordinate Mg(2+): D9 and E56.

This sequence belongs to the P-Pant transferase superfamily. AcpS family. Requires Mg(2+) as cofactor.

The protein resides in the cytoplasm. The enzyme catalyses apo-[ACP] + CoA = holo-[ACP] + adenosine 3',5'-bisphosphate + H(+). In terms of biological role, transfers the 4'-phosphopantetheine moiety from coenzyme A to a Ser of acyl-carrier-protein. The sequence is that of Holo-[acyl-carrier-protein] synthase from Pelagibacter ubique (strain HTCC1062).